Consider the following 187-residue polypeptide: Putative manganese efflux pump MntP (187 aa).

6 helical membrane passes run methionine 3–glycine 23, leucine 41–alanine 61, serine 62–glycine 82, leucine 107–leucine 129, alanine 143–glycine 163, and alanine 166–leucine 186.

This sequence belongs to the MntP (TC 9.B.29) family.

It localises to the cell inner membrane. Its function is as follows. Probably functions as a manganese efflux pump. The sequence is that of Putative manganese efflux pump MntP from Pectobacterium atrosepticum (strain SCRI 1043 / ATCC BAA-672) (Erwinia carotovora subsp. atroseptica).